The sequence spans 277 residues: SF-assemblin (277 aa).

The segment at 1–20 (MATSGMVSPTSGRPFSPMRS) is disordered. Positions 1–27 (MATSGMVSPTSGRPFSPMRSSVLTTTG) are nonhelical region. The tract at residues 28 to 277 (SAIKLEHVSE…KMVNMQHNSA (250 aa)) is rod. Residues 70–90 (RLEKSMEAEVKRRAESDKQLQ) are a coiled coil.

Belongs to the SF-assemblin family. In terms of processing, the N-terminus is blocked.

It is found in the cytoplasm. It localises to the cytoskeleton. Functionally, major component of the striated microtubule-associated fibers (SMAFs; system-I-fibers). The polypeptide is SF-assemblin (Dunaliella bioculata (Green alga)).